The primary structure comprises 209 residues: Outer-membrane lipoprotein carrier protein (209 aa).

Positions 1–21 are cleaved as a signal peptide; the sequence is MHRQLRYAVLATALFASTAFA.

This sequence belongs to the LolA family. Monomer.

It localises to the periplasm. Participates in the translocation of lipoproteins from the inner membrane to the outer membrane. Only forms a complex with a lipoprotein if the residue after the N-terminal Cys is not an aspartate (The Asp acts as a targeting signal to indicate that the lipoprotein should stay in the inner membrane). This chain is Outer-membrane lipoprotein carrier protein, found in Xanthomonas campestris pv. campestris (strain 8004).